Consider the following 515-residue polypeptide: Probable cytochrome P450 4p3 (515 aa).

Residues Glu-322 and Cys-461 each coordinate heme.

It belongs to the cytochrome P450 family. It depends on heme as a cofactor.

The protein resides in the endoplasmic reticulum membrane. Its subcellular location is the microsome membrane. Its function is as follows. May be involved in the metabolism of insect hormones and in the breakdown of synthetic insecticides. The sequence is that of Probable cytochrome P450 4p3 (Cyp4p3) from Drosophila melanogaster (Fruit fly).